The chain runs to 98 residues: Large ribosomal subunit protein bL21 (98 aa).

Belongs to the bacterial ribosomal protein bL21 family. In terms of assembly, part of the 50S ribosomal subunit. Contacts protein L20.

In terms of biological role, this protein binds to 23S rRNA in the presence of protein L20. The sequence is that of Large ribosomal subunit protein bL21 from Chloroherpeton thalassium (strain ATCC 35110 / GB-78).